A 586-amino-acid polypeptide reads, in one-letter code: Glutathione hydrolase 5 proenzyme (586 aa).

The Cytoplasmic segment spans residues 1-8 (MARGYGAT). A helical; Signal-anchor for type II membrane protein transmembrane segment spans residues 9 to 29 (VSLVLLGLGLALAVIVLAVVL). Residues 30-586 (SRHQAPCGPQ…LRKSGEAAGY (557 aa)) lie on the Extracellular side of the membrane. N-linked (GlcNAc...) asparagine glycosylation is present at asparagine 98. Arginine 110 contributes to the L-glutamate binding site. Asparagine 204, asparagine 303, and asparagine 347 each carry an N-linked (GlcNAc...) asparagine glycan. Threonine 388 functions as the Nucleophile in the catalytic mechanism. L-glutamate contacts are provided by residues threonine 406, glutamate 427, and 469–470 (SS). Residues asparagine 535 and asparagine 550 are each glycosylated (N-linked (GlcNAc...) asparagine).

Belongs to the gamma-glutamyltransferase family. As to quaternary structure, heterodimer composed of the light and heavy chains. The active site is located in the light chain. In terms of processing, cleaved by autocatalysis into a large and a small subunit. Glycosylated. In terms of tissue distribution, expressed in follicular dendritic cells in lymphoid follicles (at protein level).

The protein resides in the membrane. It catalyses the reaction glutathione + H2O = L-cysteinylglycine + L-glutamate. The enzyme catalyses an S-substituted glutathione + H2O = an S-substituted L-cysteinylglycine + L-glutamate. It carries out the reaction leukotriene C4 + H2O = leukotriene D4 + L-glutamate. The catalysed reaction is S-[(2E,6E,10E)-geranylgeranyl]-L-glutathione + H2O = S-[(2E,6E,10E)-geranylgeranyl]-L-cysteinylglycine + L-glutamate. It catalyses the reaction an N-terminal (5-L-glutamyl)-[peptide] + an alpha-amino acid = 5-L-glutamyl amino acid + an N-terminal L-alpha-aminoacyl-[peptide]. It functions in the pathway sulfur metabolism; glutathione metabolism. The protein operates within lipid metabolism; leukotriene D4 biosynthesis. With respect to regulation, inhibited by serine-borate. Its function is as follows. Cleaves the gamma-glutamyl bond of extracellular glutathione tripeptide (gamma-Glu-Cys-Gly) and certain glutathione conjugates. Hydrolyzes glutathione releasing L-Glu and Cys-Gly dipeptide which is further metabolized to maintain extracellular cysteine levels but also to provide cysteine necessary for intracellular glutathione synthesis. Among glutathione-S-conjugates metabolizes leukotriene C4 (LTC4) and S-geranylgeranyl-glutathione (GGG), but is inactive toward gamma-glutamyl leucine. Converts extracellular LTC4 to LTD4 during acute inflammatory response. Acts as a negative regulator of GGG bioactivity. GGT5 (via GGG catabolism) and ABCC1 (via extracellular transport) establish GGG gradients within lymphoid tissues to position P2RY8-positive lymphocytes at germinal centers in lymphoid follicles and restrict their chemotactic transmigration from blood vessels to bone marrow parenchyma. The transpeptidation reaction, i.e. the transfer of gamma-glutamyl moiety to an acceptor molecule to yield a new gamma-glutamyl compound requires high concentration of dipeptide acceptor and is considered nonphysiological. The chain is Glutathione hydrolase 5 proenzyme (GGT5) from Homo sapiens (Human).